Reading from the N-terminus, the 652-residue chain is DNA ligase (652 aa).

Residues Asp-29–Asp-33, Ser-78–Leu-79, and Glu-107 contribute to the NAD(+) site. The N6-AMP-lysine intermediate role is filled by Lys-109. 4 residues coordinate NAD(+): Arg-130, Glu-164, Lys-278, and Lys-302. Zn(2+) is bound by residues Cys-395, Cys-398, Cys-413, and Cys-418. Positions Ser-577–Leu-652 constitute a BRCT domain.

It belongs to the NAD-dependent DNA ligase family. LigA subfamily. Mg(2+) is required as a cofactor. It depends on Mn(2+) as a cofactor.

It catalyses the reaction NAD(+) + (deoxyribonucleotide)n-3'-hydroxyl + 5'-phospho-(deoxyribonucleotide)m = (deoxyribonucleotide)n+m + AMP + beta-nicotinamide D-nucleotide.. Its function is as follows. DNA ligase that catalyzes the formation of phosphodiester linkages between 5'-phosphoryl and 3'-hydroxyl groups in double-stranded DNA using NAD as a coenzyme and as the energy source for the reaction. It is essential for DNA replication and repair of damaged DNA. This is DNA ligase from Streptococcus agalactiae serotype V (strain ATCC BAA-611 / 2603 V/R).